Reading from the N-terminus, the 293-residue chain is Inhibitory synaptic factor 1 (293 aa).

The disordered stretch occupies residues 1–26; the sequence is MNIRGAPDLGQPSDDPSSGGERERIR. Residues 30–63 are a coiled coil; the sequence is KMVIGQLEGILRELKEVAKELREVVSQIDKLTSD. 2 disordered regions span residues 120–186 and 200–293; these read TPSD…RERV and DDEE…RGKN. Residues 171–180 are compositionally biased toward polar residues; the sequence is VKSQLPQRTP. The segment covering 200-215 has biased composition (acidic residues); sequence DDEEGDGEQEVEEEEV. 2 stretches are compositionally biased toward polar residues: residues 243-256 and 264-286; these read SPLT…TLAP and RNSS…TATR.

It belongs to the INSYN1 family. As to quaternary structure, interacts with GPHN.

The protein resides in the postsynaptic density. In terms of biological role, component of the protein machinery at the inhibitory synapses, probably acting as a scaffold. Inhibitory synapses dampen neuronal activity through postsynaptic hyperpolarization. This synaptic inhibition is fundamental for the functioning of the central nervous system, shaping and orchestrating the flow of information through neuronal networks to generate a precise neural code. The chain is Inhibitory synaptic factor 1 from Homo sapiens (Human).